The sequence spans 250 residues: Leucyl/phenylalanyl-tRNA--protein transferase (250 aa).

Belongs to the L/F-transferase family.

It is found in the cytoplasm. It catalyses the reaction N-terminal L-lysyl-[protein] + L-leucyl-tRNA(Leu) = N-terminal L-leucyl-L-lysyl-[protein] + tRNA(Leu) + H(+). The catalysed reaction is N-terminal L-arginyl-[protein] + L-leucyl-tRNA(Leu) = N-terminal L-leucyl-L-arginyl-[protein] + tRNA(Leu) + H(+). The enzyme catalyses L-phenylalanyl-tRNA(Phe) + an N-terminal L-alpha-aminoacyl-[protein] = an N-terminal L-phenylalanyl-L-alpha-aminoacyl-[protein] + tRNA(Phe). In terms of biological role, functions in the N-end rule pathway of protein degradation where it conjugates Leu, Phe and, less efficiently, Met from aminoacyl-tRNAs to the N-termini of proteins containing an N-terminal arginine or lysine. The polypeptide is Leucyl/phenylalanyl-tRNA--protein transferase (Cupriavidus necator (strain ATCC 17699 / DSM 428 / KCTC 22496 / NCIMB 10442 / H16 / Stanier 337) (Ralstonia eutropha)).